Reading from the N-terminus, the 415-residue chain is Krueppel-like factor 15 (415 aa).

Positions 75 to 83 (SILDFLLSR) match the 9aaTAD motif. Residues 172–216 (LSAGSHRSHLHPESAGRERCTPPPGGTSGGGAQSAGEGPAHDGPV) form a disordered region. The segment covering 181–191 (LHPESAGRERC) has biased composition (basic and acidic residues). C2H2-type zinc fingers lie at residues 320–344 (HKCTFPGCSKMYTKSSHLKAHLRRH), 350–374 (FACTWPGCGWRFSRSDELSRHRRSH), and 380–402 (YQCPVCEKKFARSDHLSKHIKVH).

It belongs to the Sp1 C2H2-type zinc-finger protein family. Interacts with MYOCD. Interacts with EP300. Expressed in aortic smooth muscle cells.

The protein resides in the nucleus. Transcriptional regulator that binds to the GA element of the CLCNKA promoter. Binds to the KCNIP2 promoter and regulates KCNIP2 circadian expression in the heart. Is a repressor of CCN2 expression, involved in the control of cardiac fibrosis. Is also involved in the control of cardiac hypertrophy acting through the inhibition of MEF2A, GATA4 and MYOCD activity. Is a negative regulator of TP53 acetylation. Inhibits NF-kappa-B activation through repression of EP300-dependent RELA acetylation. Involved in podocyte differentiation. In Mus musculus (Mouse), this protein is Krueppel-like factor 15 (Klf15).